Reading from the N-terminus, the 840-residue chain is DNA mismatch repair protein MutS (840 aa).

ATP is bound at residue 601 to 608 (GPNMSGKS).

Belongs to the DNA mismatch repair MutS family.

Its function is as follows. This protein is involved in the repair of mismatches in DNA. It is possible that it carries out the mismatch recognition step. This protein has a weak ATPase activity. This Lactococcus lactis subsp. cremoris (strain SK11) protein is DNA mismatch repair protein MutS.